The following is a 176-amino-acid chain: MRTVSAPSAVALVVIVAAGLAWTSLASVAPPAPAPGSEETCGTVVRALMPCLPFVQGKEKEPSKGCCSGAKRLDGETKTGLQRVHACECIQTAMKTYSDIDGKLVSEVPKHCGIVDSKLPPIDVNMDCKTLGVVPRQPQLPVSLRHGPVTGPSDPAHKARLERPQIRVPPPAPEKA.

The N-terminal stretch at 1–37 (MRTVSAPSAVALVVIVAAGLAWTSLASVAPPAPAPGS) is a signal peptide. Cystine bridges form between C41-C89, C51-C66, C67-C112, and C87-C128. The interval 139-176 (QLPVSLRHGPVTGPSDPAHKARLERPQIRVPPPAPEKA) is disordered. Positions 155-165 (PAHKARLERPQ) are enriched in basic and acidic residues. The segment covering 167 to 176 (RVPPPAPEKA) has biased composition (pro residues).

The protein belongs to the plant LTP family.

Functionally, plant non-specific lipid-transfer proteins transfer phospholipids as well as galactolipids across membranes. May play a role in wax or cutin deposition in the cell walls of expanding epidermal cells and certain secretory tissues. This chain is Probable non-specific lipid-transfer protein 1, found in Parietaria judaica (Pellitory-of-the-wall).